The following is a 361-amino-acid chain: Dual specificity mitogen-activated protein kinase kinase 6 (361 aa).

Composition is skewed to basic and acidic residues over residues 1–11 and 37–48; these read MEGGSDKESKV and PKELKLPKEVFE. The tract at residues 1–61 is disordered; that stretch reads MEGGSDKESK…PAPTPPRDLD (61 aa). The tract at residues 30–46 is d domain; the sequence is VRGKKKLPKELKLPKEV. Positions 80-341 constitute a Protein kinase domain; sequence LEQIGELGRG…YTELMQHPFF (262 aa). ATP is bound by residues 86-94 and Lys109; that span reads LGRGAYGVV. Asp206 acts as the Proton acceptor in catalysis. A Phosphoserine; by MAPK3 modification is found at Ser234. Thr238 bears the Phosphothreonine; by MAPK3 mark. A DVD domain region spans residues 338–361; the sequence is HPFFTLHDSKDTDVASFVKTILGD.

Belongs to the protein kinase superfamily. STE Ser/Thr protein kinase family. MAP kinase kinase subfamily. In terms of assembly, dimer. Interacts (via its D domain) with its MAP kinase substrates. Interacts (via its DVD domain) with MAP3Ks activators. Post-translationally, weakly autophosphorylated. Phosphorylated at Ser-234 and Thr-238 by the majority of M3Ks.

The protein resides in the nucleus. It localises to the cytoplasm. It is found in the cytoskeleton. The enzyme catalyses L-seryl-[protein] + ATP = O-phospho-L-seryl-[protein] + ADP + H(+). It catalyses the reaction L-threonyl-[protein] + ATP = O-phospho-L-threonyl-[protein] + ADP + H(+). It carries out the reaction L-tyrosyl-[protein] + ATP = O-phospho-L-tyrosyl-[protein] + ADP + H(+). With respect to regulation, activated by dual phosphorylation on Ser-234 and Thr-238 in response to a variety of cellular stresses, including UV radiation, osmotic shock, hypoxia, inflammatory cytokines, interferon gamma (IFNG), and less often by growth factors. MAP2K6/MKK6 is activated by the majority of M3Ks. Its function is as follows. Dual specificity protein kinase which acts as an essential component of the MAP kinase signal transduction pathway. Catalyzes the concomitant phosphorylation of a threonine and a tyrosine residue in the MAP kinases p38 and plays an important role in the regulation of cellular responses to cytokines and all kinds of stresses. The p38 MAP kinase signal transduction pathway leads to direct activation of transcription factors. Phosphorylation by MAP2K6 asymmetrically activates p38 on one side of the blastodisc, an event which is necessary for blastomere cleavage. In Danio rerio (Zebrafish), this protein is Dual specificity mitogen-activated protein kinase kinase 6.